Here is a 290-residue protein sequence, read N- to C-terminus: Protease HtpX (290 aa).

2 consecutive transmembrane segments (helical) span residues isoleucine 4–leucine 24 and glycine 36–isoleucine 56. A Zn(2+)-binding site is contributed by histidine 142. Glutamate 143 is an active-site residue. Histidine 146 contributes to the Zn(2+) binding site. A run of 2 helical transmembrane segments spans residues glycine 150–alanine 170 and phenylalanine 193–tryptophan 213. Glutamate 219 provides a ligand contact to Zn(2+).

This sequence belongs to the peptidase M48B family. The cofactor is Zn(2+).

Its subcellular location is the cell inner membrane. In Ectopseudomonas mendocina (strain ymp) (Pseudomonas mendocina), this protein is Protease HtpX.